Consider the following 347-residue polypeptide: NADH-ubiquinone oxidoreductase chain 2 (347 aa).

The next 11 membrane-spanning stretches (helical) occupy residues 2-22 (SPYV…MTLI), 25-45 (HWLT…PLMT), 56-76 (AIKY…SAIF), 96-116 (FMMT…FWVP), 122-142 (IPLL…ISIF), 149-169 (LNMS…GWGG), 178-197 (ILAY…IMIY), 202-219 (ILNL…FMVL), 241-261 (MIII…TGFM), 278-298 (LAMM…RIIY), and 323-343 (ILPI…TPMF).

The protein belongs to the complex I subunit 2 family. As to quaternary structure, core subunit of respiratory chain NADH dehydrogenase (Complex I) which is composed of 45 different subunits. Interacts with TMEM242.

Its subcellular location is the mitochondrion inner membrane. The catalysed reaction is a ubiquinone + NADH + 5 H(+)(in) = a ubiquinol + NAD(+) + 4 H(+)(out). In terms of biological role, core subunit of the mitochondrial membrane respiratory chain NADH dehydrogenase (Complex I) which catalyzes electron transfer from NADH through the respiratory chain, using ubiquinone as an electron acceptor. Essential for the catalytic activity and assembly of complex I. In Metachirus nudicaudatus (Brown four-eyed opossum), this protein is NADH-ubiquinone oxidoreductase chain 2.